A 339-amino-acid polypeptide reads, in one-letter code: NADH-quinone oxidoreductase subunit H (339 aa).

The next 8 helical transmembrane spans lie at 7-27 (LFWITLKIMALVVPLMLAVAY), 77-97 (VLFVIAPLLAIMPALAAWAVI), 112-132 (LLYILAMTSLGVYGIIIAGWA), 149-169 (VVSYEIAMGFALVGVLMAAGS), 180-200 (AGGIFHWFWLPLLPLFLVYWI), 235-255 (VFFLAEYANMILISAVAAVMF), 276-296 (VPGVVWFMLKTAFFMFCYLWF), and 315-335 (VLIPVTVVWLIVLTIFIVTGF).

This sequence belongs to the complex I subunit 1 family. As to quaternary structure, NDH-1 is composed of 14 different subunits. Subunits NuoA, H, J, K, L, M, N constitute the membrane sector of the complex.

It is found in the cell inner membrane. The catalysed reaction is a quinone + NADH + 5 H(+)(in) = a quinol + NAD(+) + 4 H(+)(out). NDH-1 shuttles electrons from NADH, via FMN and iron-sulfur (Fe-S) centers, to quinones in the respiratory chain. The immediate electron acceptor for the enzyme in this species is believed to be ubiquinone. Couples the redox reaction to proton translocation (for every two electrons transferred, four hydrogen ions are translocated across the cytoplasmic membrane), and thus conserves the redox energy in a proton gradient. This subunit may bind ubiquinone. This Alkalilimnicola ehrlichii (strain ATCC BAA-1101 / DSM 17681 / MLHE-1) protein is NADH-quinone oxidoreductase subunit H.